A 95-amino-acid chain; its full sequence is Cystatin-A2 (95 aa).

Positions 47–51 match the Secondary area of contact motif; the sequence is QLVNG.

The protein belongs to the cystatin family.

Its subcellular location is the cytoplasm. Its function is as follows. Intracellular thiol proteinase inhibitor. Inhibits cathepsin B, but not papain. This is Cystatin-A2 (cpiB) from Dictyostelium discoideum (Social amoeba).